Consider the following 528-residue polypeptide: Pentatricopeptide repeat-containing protein At1g62914, mitochondrial (528 aa).

The transit peptide at 1–20 directs the protein to the mitochondrion; the sequence is MLAKISSSAKRFVHRSLVVR. 13 PPR repeats span residues 77–111, 112–146, 147–181, 182–216, 217–251, 252–286, 287–321, 322–356, 357–391, 392–426, 427–461, 462–496, and 497–528; these read SIIE…GISH, NLYT…GYEP, DIVT…GYKP, DTVT…GCQP, DLVT…KIEA, NVVI…GVRP, NVIT…KINP, NLVT…SIDP, NIFT…DCLP, NVVT…GLVG, NTVT…GVHP, NILT…TMEP, and DIYT…ALKE.

This sequence belongs to the PPR family. P subfamily.

The protein localises to the mitochondrion. The sequence is that of Pentatricopeptide repeat-containing protein At1g62914, mitochondrial from Arabidopsis thaliana (Mouse-ear cress).